The primary structure comprises 122 residues: Small ribosomal subunit protein uS13 (122 aa).

Residues 98–122 (VRGQRTHTNARTRKGPAKAIAGKKK) are disordered.

Belongs to the universal ribosomal protein uS13 family. Part of the 30S ribosomal subunit. Forms a loose heterodimer with protein S19. Forms two bridges to the 50S subunit in the 70S ribosome.

Its function is as follows. Located at the top of the head of the 30S subunit, it contacts several helices of the 16S rRNA. In the 70S ribosome it contacts the 23S rRNA (bridge B1a) and protein L5 of the 50S subunit (bridge B1b), connecting the 2 subunits; these bridges are implicated in subunit movement. Contacts the tRNAs in the A and P-sites. This chain is Small ribosomal subunit protein uS13, found in Ruegeria sp. (strain TM1040) (Silicibacter sp.).